Reading from the N-terminus, the 66-residue chain is Toxin BomPI (66 aa).

In terms of domain architecture, LCN-type CS-alpha/beta spans R2–H64. 4 cysteine pairs are disulfide-bonded: C12–C63, C16–C36, C22–C46, and C26–C48.

It belongs to the long (4 C-C) scorpion toxin superfamily. Sodium channel inhibitor family. Alpha subfamily. As to expression, expressed by the venom gland.

The protein localises to the secreted. Functionally, alpha toxins bind voltage-independently at site-3 of sodium channels (Nav) and inhibit the inactivation of the activated channels, thereby blocking neuronal transmission. The chain is Toxin BomPI from Buthus occitanus mardochei (Moroccan scorpion).